Here is a 349-residue protein sequence, read N- to C-terminus: Protein RecA (349 aa).

An ATP-binding site is contributed by 65–72; that stretch reads GPESSGKT.

This sequence belongs to the RecA family.

The protein localises to the cytoplasm. Can catalyze the hydrolysis of ATP in the presence of single-stranded DNA, the ATP-dependent uptake of single-stranded DNA by duplex DNA, and the ATP-dependent hybridization of homologous single-stranded DNAs. It interacts with LexA causing its activation and leading to its autocatalytic cleavage. The protein is Protein RecA of Acinetobacter baumannii (strain AB307-0294).